An 86-amino-acid chain; its full sequence is Photosystem I reaction center subunit PsaK (86 aa).

Transmembrane regions (helical) follow at residues 15-35 (SWSISTAIIMVICNLLCIGLG) and 57-77 (GLPELLATTSLGHIIGAGAII).

The protein belongs to the PsaG/PsaK family.

It localises to the plastid. It is found in the chloroplast thylakoid membrane. This Gracilaria tenuistipitata var. liui (Red alga) protein is Photosystem I reaction center subunit PsaK.